The primary structure comprises 3595 residues: Replicase polyprotein 1ab (3595 aa).

The C4-type; atypical zinc-finger motif lies at 3 to 23; it reads CECPRSNLVVMCSGAFCCVLC. Residues 56 to 164 form the Peptidase C31 domain; it reads SGLEGRYCAL…PTTIPFNTTG (109 aa). Catalysis depends on for Nsp1-alpha papain-like cysteine proteinase activity residues C63 and H130. The Peptidase C32 domain occupies 239–350; that stretch reads LSFEHGRCWL…LKLPGKTYFG (112 aa). Residues C246 and H309 each act as for Nsp1-beta papain-like cysteine proteinase activity in the active site. Active-site for Nsp2 cysteine proteinase activity residues include C378 and H430. The tract at residues 482 to 527 is disordered; sequence RRGGGKKSGQSSGVRAPGRTTPDLAGDWGKAVDDQEKTASKVTTDK. Positions 511–520 are enriched in basic and acidic residues; it reads KAVDDQEKTA. A Peptidase C33 domain is found at 633 to 736; it reads TFIPPPDGGC…HGWCSSLLSE (104 aa). The disordered stretch occupies residues 808 to 862; the sequence is QVRTVDPSQPAAPLPPVPRPRKRKAAAQQVSKVPSEQDPSLAHDPPEKPDSVRPP. Basic and acidic residues predominate over residues 851-860; it reads DPPEKPDSVR. The next 7 helical transmembrane spans lie at 922 to 942, 951 to 971, 1019 to 1039, 1239 to 1259, 1316 to 1336, 1345 to 1365, and 1381 to 1401; these read MFFL…AGVI, ILCC…AISS, VALF…VIGV, IFRT…GYWV, PYIV…PGII, ALLP…IIAA, and AFVD…GWIL. Residues 922-1039 form an HD1 region; sequence MFFLFLGSPL…MVDVLLVIGV (118 aa). Residues 1239-1399 are HD2; the sequence is IFRTALAAAW…VVLTALLVGW (161 aa). Residues 1464 to 1664 form the Peptidase S32 domain; sequence GLLREKTRAS…RLLESSINLE (201 aa). Residues H1502, D1527, and S1580 each act as charge relay system; for 3C-like serine proteinase activity in the active site. A run of 4 helical transmembrane segments spans residues 1673 to 1693, 1711 to 1731, 1744 to 1764, and 1784 to 1804; these read IIVA…PFVV, YNYS…IFFI, ALIC…IILG, and AIAI…LELF. The segment at 1687–1804 is HD3; that stretch reads LSIPFVVAFF…CVAACCLELF (118 aa). A NiRAN domain is found at 2083–2253; the sequence is DMNRLRAIIS…YPYKLHPVRG (171 aa). Positions 2491 to 2625 constitute a RdRp catalytic domain; the sequence is GRCLETDLAS…LNESDDLPNF (135 aa). In terms of domain architecture, AV ZBD spans 2746–2812; the sequence is GKEVQVCSIC…IPILKDRTKF (67 aa). Residues C2752, C2755, C2765, C2770, C2773, H2777, H2779, C2782, C2789, H2791, C2798, and C2801 each contribute to the Zn(2+) site. A (+)RNA virus helicase ATP-binding domain is found at 2862-3022; it reads DLPDGKYSMK…VFELMKKNAL (161 aa). 2897-2904 serves as a coordination point for ATP; the sequence is GPPGSGKT. Residues 3023–3157 enclose the (+)RNA virus helicase C-terminal domain; the sequence is HAIYRFGQNI…DGKARVMLSD (135 aa). The AV-Nsp11N/CoV-Nsp15M domain maps to 3196 to 3292; it reads SGSLSPLPRV…LTKFLDGRAV (97 aa). A NendoU domain is found at 3294–3416; that stretch reads MEDSVYSTGR…MVWRDQTMYF (123 aa). Catalysis depends on residues H3325, H3340, and K3369.

The protein belongs to the arteriviridae polyprotein family. In terms of processing, specific enzymatic cleavages in vivo by its own proteases yield mature proteins. There are two alternative pathways for processing. Either nsp4-5 is cleaved, which represents the major pathway or the nsp5-6 and nsp6-7 are processed, which represents the minor pathway. The major pathway occurs when nsp2 acts as a cofactor for nsp4.

Its subcellular location is the host membrane. The protein resides in the host cytoplasm. The protein localises to the host perinuclear region. The catalysed reaction is RNA(n) + a ribonucleoside 5'-triphosphate = RNA(n+1) + diphosphate. It carries out the reaction ATP + H2O = ADP + phosphate + H(+). It catalyses the reaction uridylyl-uridylyl-ribonucleotide-RNA = a 3'-end uridylyl-2',3'-cyclophospho-uridine-RNA + a 5'-end dephospho-ribonucleoside-RNA. The replicase polyprotein 1ab is a multifunctional protein: it contains the activities necessary for the transcription of negative stranded RNA, leader RNA, subgenomic mRNAs and progeny virion RNA as well as proteinases responsible for the cleavage of the polyprotein into functional products. Its function is as follows. The Nsp1 chain is essential for viral subgenomic mRNA synthesis. Functionally, the 3C-like serine proteinase chain is responsible for the majority of cleavages as it cleaves the C-terminus of the polyprotein. In terms of biological role, plays a role in viral transcription/replication and prevents the simultaneous activation of host cell dsRNA sensors, such as MDA5/IFIH1, OAS, and PKR. Acts by degrading the 5'-polyuridines generated during replication of the poly(A) region of viral genomic and subgenomic RNAs. Catalyzes a two-step reaction in which a 2'3'-cyclic phosphate (2'3'-cP) is first generated by 2'-O transesterification, which is then hydrolyzed to a 3'-phosphate (3'-P). If not degraded, poly(U) RNA would hybridize with poly(A) RNA tails and activate host dsRNA sensors. The helicase chain, which contains a zinc finger structure, displays RNA and DNA duplex-unwinding activities with 5' to 3' polarity. The polypeptide is Replicase polyprotein 1ab (rep) (Simian hemorrhagic fever virus (SHFV)).